We begin with the raw amino-acid sequence, 273 residues long: Dermonecrotic toxin LapSicTox-alphaIB1aiii (273 aa).

H5 is a catalytic residue. Mg(2+) is bound by residues E25 and D27. The Nucleophile role is filled by H41. Intrachain disulfides connect C45–C51 and C47–C190. D85 serves as a coordination point for Mg(2+). A glycan (N-linked (GlcNAc...) asparagine) is linked at N250.

Belongs to the arthropod phospholipase D family. Class II subfamily. It depends on Mg(2+) as a cofactor. Expressed by the venom gland.

It is found in the secreted. The enzyme catalyses an N-(acyl)-sphingosylphosphocholine = an N-(acyl)-sphingosyl-1,3-cyclic phosphate + choline. It carries out the reaction an N-(acyl)-sphingosylphosphoethanolamine = an N-(acyl)-sphingosyl-1,3-cyclic phosphate + ethanolamine. The catalysed reaction is a 1-acyl-sn-glycero-3-phosphocholine = a 1-acyl-sn-glycero-2,3-cyclic phosphate + choline. It catalyses the reaction a 1-acyl-sn-glycero-3-phosphoethanolamine = a 1-acyl-sn-glycero-2,3-cyclic phosphate + ethanolamine. In terms of biological role, dermonecrotic toxins cleave the phosphodiester linkage between the phosphate and headgroup of certain phospholipids (sphingolipid and lysolipid substrates), forming an alcohol (often choline) and a cyclic phosphate. This toxin acts on sphingomyelin (SM). It may also act on ceramide phosphoethanolamine (CPE), lysophosphatidylcholine (LPC) and lysophosphatidylethanolamine (LPE), but not on lysophosphatidylserine (LPS), and lysophosphatidylglycerol (LPG). It acts by transphosphatidylation, releasing exclusively cyclic phosphate products as second products. Induces dermonecrosis, hemolysis, increased vascular permeability, edema, inflammatory response, and platelet aggregation. The polypeptide is Dermonecrotic toxin LapSicTox-alphaIB1aiii (Loxosceles apachea (Apache recluse spider)).